A 309-amino-acid polypeptide reads, in one-letter code: Protein MAK16 homolog (309 aa).

The interval 194-309 is disordered; the sequence is EADQFSEEEA…IEEETENQAN (116 aa). 2 stretches are compositionally biased toward acidic residues: residues 195–227 and 235–270; these read ADQF…DIED and VEGD…DDEE. Over residues 275-293 the composition is skewed to basic residues; sequence ITKKRGPTFKPTKKTPQKR. Positions 299 to 309 are enriched in acidic residues; the sequence is EIEEETENQAN.

It belongs to the MAK16 family.

It localises to the nucleus. It is found in the nucleolus. This chain is Protein MAK16 homolog (mak16l), found in Dictyostelium discoideum (Social amoeba).